Consider the following 250-residue polypeptide: Triosephosphate isomerase (250 aa).

Residue 9 to 11 (NWK) coordinates substrate. His-94 serves as the catalytic Electrophile. Catalysis depends on Glu-166, which acts as the Proton acceptor. Residues Gly-172, Ser-212, and 233–234 (GG) each bind substrate.

Belongs to the triosephosphate isomerase family. In terms of assembly, homodimer.

It localises to the cytoplasm. It catalyses the reaction D-glyceraldehyde 3-phosphate = dihydroxyacetone phosphate. It functions in the pathway carbohydrate biosynthesis; gluconeogenesis. Its pathway is carbohydrate degradation; glycolysis; D-glyceraldehyde 3-phosphate from glycerone phosphate: step 1/1. Functionally, involved in the gluconeogenesis. Catalyzes stereospecifically the conversion of dihydroxyacetone phosphate (DHAP) to D-glyceraldehyde-3-phosphate (G3P). The protein is Triosephosphate isomerase of Clostridium novyi (strain NT).